A 327-amino-acid polypeptide reads, in one-letter code: MIPGPATLPDLLDRLQVVALPMRVRFRGITTREVALIEGPSGWGEFGAFLEYQPPEAAAWLASAIDAAYGQPPPVRRGRIPINATVPAVPPAQVPELLARFPGARTAKVKVAEPGQTLASDVERVNAVRALVPTVRVDANGGWSVDQAAQAAVALTADGPLEYLEQPCATVGELAELRRRIEVPIAADEAIRKAEDPLAVVRAGAADVAVLKVAPLGGVWALLDIAAQIDIPVVISSALDSAVGIAAGLSAAAALPQLQHACGLGTGGLFVEDVAEPAIPVDGALAPQRVAPDPARLRALGAAPDRRQWWIDRIKACYPLLYRRSGD.

Lys110 functions as the Proton donor in the catalytic mechanism. 3 residues coordinate Mg(2+): Asp138, Glu165, and Asp188. Lys212 (proton acceptor) is an active-site residue.

The protein belongs to the mandelate racemase/muconate lactonizing enzyme family. MenC type 1 subfamily. A divalent metal cation is required as a cofactor.

The catalysed reaction is (1R,6R)-6-hydroxy-2-succinyl-cyclohexa-2,4-diene-1-carboxylate = 2-succinylbenzoate + H2O. Its pathway is quinol/quinone metabolism; 1,4-dihydroxy-2-naphthoate biosynthesis; 1,4-dihydroxy-2-naphthoate from chorismate: step 4/7. It participates in quinol/quinone metabolism; menaquinone biosynthesis. In terms of biological role, converts 2-succinyl-6-hydroxy-2,4-cyclohexadiene-1-carboxylate (SHCHC) to 2-succinylbenzoate (OSB). The chain is o-succinylbenzoate synthase from Mycobacterium ulcerans (strain Agy99).